The sequence spans 95 residues: MRTLSLLTLLALAALCLSDLTDAKPSGPESDKAFMSKQEGNKVVNRLRRYLGASVPSPDPLEPTREQCELNPACDELSDQYGLKTAYKRIYGITI.

The first 23 residues, 1-23 (MRTLSLLTLLALAALCLSDLTDA), serve as a signal peptide directing secretion. Positions 24-49 (KPSGPESDKAFMSKQEGNKVVNRLRR) are excised as a propeptide. A Gla domain is found at 46–92 (RLRRYLGASVPSPDPLEPTREQCELNPACDELSDQYGLKTAYKRIYG). The Ca(2+) site is built by glutamate 62, glutamate 66, glutamate 69, and aspartate 75. A disulfide bridge connects residues cysteine 68 and cysteine 74.

This sequence belongs to the osteocalcin/matrix Gla protein family. Post-translationally, gamma-carboxyglutamate residues are formed by vitamin K dependent carboxylation by GGCX. These residues are essential for the binding of calcium. Carboxylated in a Ptprv/Esp-dependent process. Decarboxylation promotes the hormone activity. As to expression, bone.

It localises to the secreted. Functionally, the carboxylated form is one of the main organic components of the bone matrix, which constitutes 1-2% of the total bone protein: it acts as a negative regulator of bone formation and is required to limit bone formation without impairing bone resorption or mineralization. The carboxylated form binds strongly to apatite and calcium. The uncarboxylated form acts as a hormone secreted by osteoblasts, which regulates different cellular processes, such as energy metabolism, male fertility and brain development. Regulates of energy metabolism by acting as a hormone favoring pancreatic beta-cell proliferation, insulin secretion and sensitivity and energy expenditure. Uncarboxylated osteocalcin hormone also promotes testosterone production in the testes: acts as a ligand for G protein-coupled receptor GPRC6A at the surface of Leydig cells, initiating a signaling response that promotes the expression of enzymes required for testosterone synthesis in a CREB-dependent manner. Also acts as a regulator of brain development: osteocalcin hormone crosses the blood-brain barrier and acts as a ligand for GPR158 on neurons, initiating a signaling response that prevents neuronal apoptosis in the hippocampus, favors the synthesis of all monoamine neurotransmitters and inhibits that of gamma-aminobutyric acid (GABA). Osteocalcin also crosses the placenta during pregnancy and maternal osteocalcin is required for fetal brain development. The polypeptide is Osteocalcin-2 (Bglap2) (Mus musculus (Mouse)).